Here is a 241-residue protein sequence, read N- to C-terminus: Uridylate kinase (241 aa).

15-18 is an ATP binding site; sequence KLSG. Residues 23–28 form an involved in allosteric activation by GTP region; the sequence is GSEGFG. Gly57 serves as a coordination point for UMP. ATP-binding residues include Gly58 and Arg62. UMP is bound by residues Asp77 and 138–145; that span reads TGNPFFTT. The ATP site is built by Thr165, Phe171, and Asp174.

The protein belongs to the UMP kinase family. As to quaternary structure, homohexamer.

The protein resides in the cytoplasm. The enzyme catalyses UMP + ATP = UDP + ADP. It participates in pyrimidine metabolism; CTP biosynthesis via de novo pathway; UDP from UMP (UMPK route): step 1/1. Allosterically activated by GTP. Inhibited by UTP. Its function is as follows. Catalyzes the reversible phosphorylation of UMP to UDP. The protein is Uridylate kinase of Vibrio vulnificus (strain CMCP6).